A 33-amino-acid polypeptide reads, in one-letter code: Cytochrome b6-f complex subunit 8 (33 aa).

A helical membrane pass occupies residues 2 to 22 (LFTIAWASLAAVFSFSIAMVV).

It belongs to the PetN family. In terms of assembly, the 4 large subunits of the cytochrome b6-f complex are cytochrome b6, subunit IV (17 kDa polypeptide, PetD), cytochrome f and the Rieske protein, while the 4 small subunits are PetG, PetL, PetM and PetN. The complex functions as a dimer.

It is found in the cellular thylakoid membrane. In terms of biological role, component of the cytochrome b6-f complex, which mediates electron transfer between photosystem II (PSII) and photosystem I (PSI), cyclic electron flow around PSI, and state transitions. This Synechococcus sp. (strain CC9311) protein is Cytochrome b6-f complex subunit 8.